We begin with the raw amino-acid sequence, 487 residues long: NADH-quinone oxidoreductase subunit N (487 aa).

13 helical membrane passes run 18-38, 44-64, 84-104, 116-136, 169-189, 211-231, 242-262, 277-297, 305-325, 333-353, 377-397, 410-430, and 457-477; these read LVPE…DLFV, VWTH…LATG, VMKT…WTYL, VLVL…SLLM, FVLG…VYGA, LLTG…AAPF, APAP…FGMA, WHLL…LMAI, MLAY…AGGG, MFYA…IIAL, AGLV…LGFW, DMLW…YYYL, and VLGV…PIMV.

It belongs to the complex I subunit 2 family. As to quaternary structure, NDH-1 is composed of 14 different subunits. Subunits NuoA, H, J, K, L, M, N constitute the membrane sector of the complex.

It is found in the cell inner membrane. It carries out the reaction a quinone + NADH + 5 H(+)(in) = a quinol + NAD(+) + 4 H(+)(out). Functionally, NDH-1 shuttles electrons from NADH, via FMN and iron-sulfur (Fe-S) centers, to quinones in the respiratory chain. The immediate electron acceptor for the enzyme in this species is believed to be ubiquinone. Couples the redox reaction to proton translocation (for every two electrons transferred, four hydrogen ions are translocated across the cytoplasmic membrane), and thus conserves the redox energy in a proton gradient. The sequence is that of NADH-quinone oxidoreductase subunit N from Xanthomonas euvesicatoria pv. vesicatoria (strain 85-10) (Xanthomonas campestris pv. vesicatoria).